The following is a 423-amino-acid chain: Serine hydroxymethyltransferase (423 aa).

Residues L120 and 124–126 contribute to the (6S)-5,6,7,8-tetrahydrofolate site; that span reads GHL. K229 is subject to N6-(pyridoxal phosphate)lysine. 353–355 serves as a coordination point for (6S)-5,6,7,8-tetrahydrofolate; that stretch reads SPF.

This sequence belongs to the SHMT family. Homodimer. It depends on pyridoxal 5'-phosphate as a cofactor.

It localises to the cytoplasm. It carries out the reaction (6R)-5,10-methylene-5,6,7,8-tetrahydrofolate + glycine + H2O = (6S)-5,6,7,8-tetrahydrofolate + L-serine. The protein operates within one-carbon metabolism; tetrahydrofolate interconversion. Its pathway is amino-acid biosynthesis; glycine biosynthesis; glycine from L-serine: step 1/1. Catalyzes the reversible interconversion of serine and glycine with tetrahydrofolate (THF) serving as the one-carbon carrier. This reaction serves as the major source of one-carbon groups required for the biosynthesis of purines, thymidylate, methionine, and other important biomolecules. Also exhibits THF-independent aldolase activity toward beta-hydroxyamino acids, producing glycine and aldehydes, via a retro-aldol mechanism. The sequence is that of Serine hydroxymethyltransferase from Prochlorococcus marinus subsp. pastoris (strain CCMP1986 / NIES-2087 / MED4).